Reading from the N-terminus, the 765-residue chain is BRCA1-associated RING domain protein 1 (765 aa).

Positions 20–113 are required for BRCA1 binding; it reads MEPATDGLWA…KLQNLLHDNK (94 aa). An RING-type zinc finger spans residues 44 to 81; it reads CSRCANILKEPVCLGGCEHIFCSGCISDCVGSGCPVCY. A Glycyl lysine isopeptide (Lys-Gly) (interchain with G-Cter in SUMO2) cross-link involves residue Lys152. 3 disordered regions span residues 183-229, 299-328, and 369-410; these read AVPK…EELK, KDLR…GSNI, and NASD…MPAR. A compositionally biased stretch (basic residues) spans 195 to 204; sequence SAKKHPKKSV. The segment covering 207–229 has biased composition (basic and acidic residues); that stretch reads INREENLRPETKDSRFDSKEELK. The span at 316 to 328 shows a compositional bias: polar residues; sequence PTTSTSDSCGSNI. Residue Ser378 is modified to Phosphoserine. Thr381 carries the phosphothreonine modification. Residues 391–403 are compositionally biased toward polar residues; the sequence is HRQMMSSPSTVKL. Lys411 participates in a covalent cross-link: Glycyl lysine isopeptide (Lys-Gly) (interchain with G-Cter in SUMO2). 3 ANK repeats span residues 415–447, 448–480, and 481–513; these read RGET…VKDH, AGWT…TPGY, and QNDS…AVNI. An ANK 4; degenerate repeat occupies 514 to 534; sequence FGVRPVDYTDNENIRSLLLLP. Residues 542–546 form a flexible linker region; it reads TSQCS. 2 consecutive BRCT domains span residues 549–641 and 655–765; these read NTGQ…KYEV and LLPK…PLDS.

Homo- and heterodimer. Heterodimer (RING-type zinc finger) with BRCA1. Heterodimer (via ANK repeats and BRCT domains) with CSTF1/CSTF-50. Component of the BRCA1-A complex, at least composed of the BRCA1, BARD1, UIMC1/RAP80, ABRAXAS1, BRCC3/BRCC36, BABAM2 and BABAM1/NBA1. Interacts with UBXN1. In terms of processing, processed during apoptosis. The homodimer is more susceptible to proteolytic cleavage than the BARD1/BRCA1 heterodimer.

Its subcellular location is the nucleus. The protein localises to the cytoplasm. It catalyses the reaction S-ubiquitinyl-[E2 ubiquitin-conjugating enzyme]-L-cysteine + [acceptor protein]-L-lysine = [E2 ubiquitin-conjugating enzyme]-L-cysteine + N(6)-ubiquitinyl-[acceptor protein]-L-lysine.. The protein operates within protein modification; protein ubiquitination. Its function is as follows. E3 ubiquitin-protein ligase. The BRCA1-BARD1 heterodimer specifically mediates the formation of 'Lys-6'-linked polyubiquitin chains and coordinates a diverse range of cellular pathways such as DNA damage repair, ubiquitination and transcriptional regulation to maintain genomic stability. Plays a central role in the control of the cell cycle in response to DNA damage. Acts by mediating ubiquitin E3 ligase activity that is required for its tumor suppressor function. Also forms a heterodimer with CSTF1/CSTF-50 to modulate mRNA processing and RNAP II stability by inhibiting pre-mRNA 3' cleavage. The sequence is that of BRCA1-associated RING domain protein 1 (Bard1) from Mus musculus (Mouse).